The sequence spans 1170 residues: Thrombospondin-1 (1170 aa).

The N-terminal stretch at methionine 1–serine 18 is a signal peptide. Residues arginine 47–arginine 95 form a heparin-binding region. The Laminin G-like domain occupies serine 56–cysteine 270. A disulfide bridge links cysteine 171 with cysteine 232. 2 N-linked (GlcNAc...) asparagine glycosylation sites follow: asparagine 248 and asparagine 360. Residues proline 316–tryptophan 373 form the VWFC domain. 3 consecutive TSP type-1 domains span residues aspartate 379–aspartate 429, aspartate 435–proline 490, and asparagine 492–proline 547. A glycan (C-linked (Man) tryptophan) is linked at tryptophan 385. 3 disulfides stabilise this stretch: cysteine 391/cysteine 423, cysteine 395/cysteine 428, and cysteine 406/cysteine 413. Tryptophan 438 and tryptophan 441 each carry a C-linked (Man) tryptophan glycan. 3 cysteine pairs are disulfide-bonded: cysteine 447-cysteine 484, cysteine 451-cysteine 489, and cysteine 462-cysteine 474. O-linked (Fuc...) threonine glycosylation is present at threonine 450. Tryptophan 498 is a glycosylation site (C-linked (Man) tryptophan). Intrachain disulfides connect cysteine 504-cysteine 541, cysteine 508-cysteine 546, cysteine 519-cysteine 531, cysteine 551-cysteine 562, cysteine 556-cysteine 572, cysteine 575-cysteine 586, cysteine 592-cysteine 608, cysteine 599-cysteine 617, cysteine 620-cysteine 644, cysteine 650-cysteine 663, cysteine 657-cysteine 676, cysteine 678-cysteine 689, cysteine 705-cysteine 713, cysteine 718-cysteine 738, cysteine 754-cysteine 774, cysteine 777-cysteine 797, cysteine 813-cysteine 833, cysteine 836-cysteine 856, cysteine 874-cysteine 894, cysteine 910-cysteine 930, and cysteine 946-cysteine 1167. An O-linked (Fuc...) threonine glycan is attached at threonine 507. The involved in retention in extracellular matrix (ECM); involved in trimer formation stretch occupies residues cysteine 531 to valine 1152. The region spanning proline 547–lysine 587 is the EGF-like 1 domain. Serine 553 is a glycosylation site (O-linked (Xyl) serine). Residues proline 646–glycine 690 form the EGF-like 2 domain. TSP type-3 repeat units lie at residues glutamate 691–glutamine 726, glutamate 727–glutamine 762, tyrosine 763–glutamine 785, alanine 786–glutamine 821, arginine 822–glutamine 844, leucine 845–glutamine 882, alanine 883–glutamine 918, and lysine 919–glutamate 954. An N-linked (GlcNAc...) asparagine glycan is attached at asparagine 708. Residues histidine 840–phenylalanine 934 form a disordered region. Basic and acidic residues-rich tracts occupy residues alanine 883 to cysteine 894 and aspartate 917 to phenylalanine 934. Residues arginine 926–aspartate 928 carry the Cell attachment site motif. One can recognise a TSP C-terminal domain in the interval arginine 958–serine 1170. Asparagine 1067 is a glycosylation site (N-linked (GlcNAc...) asparagine).

This sequence belongs to the thrombospondin family. In terms of assembly, homotrimer; disulfide-linked. Can bind to fibrinogen, fibronectin, laminin, type V collagen and integrins alpha-V/beta-1, alpha-V/beta-3 and alpha-IIb/beta-3. Binds heparin. Interacts (via the C-terminal domain) with CD47. Interacts (via the TSP type I repeats) with CD36; the interaction conveys an antiangiogenic effect. Interacts (via the TSP type I repeats) with HRG; the interaction blocks the antiangiogenic effect of THBS1 with CD36. Interacts with ATF6 (via lumenal domain). Interacts with FN1; this interaction is enhanced by TNFAIP6, which may act as a bridging molecule between FN1 and THBS1. Interacts with SIRPA; the interaction stimulates phosphorylation of SIRPA.

The protein resides in the secreted. It is found in the cell surface. The protein localises to the extracellular space. Its subcellular location is the extracellular matrix. It localises to the endoplasmic reticulum. The protein resides in the sarcoplasmic reticulum. Functionally, adhesive glycoprotein that mediates cell-to-cell and cell-to-matrix interactions. Multifunctional, involved in inflammation, angiogenesis, wound healing, reactive oxygen species (ROS) signaling, nitrous oxide (NO) signaling, apoptosis, senescence, aging, cellular self-renewal, stemness, and cardiovascular and metabolic homeostasis. Negatively modulates dendritic cell activation and cytokine release, as part of an autocrine feedback loop, contributing to the resolution of inflammation and immune homeostasis. Ligand for receptor CD47. Modulates nitrous oxide (NO) signaling via CD47, hence playing a role as a pressor agent, supporting blood pressure. Plays a role in endothelial cell senescence, acting via CD47, by increasing the abundance and activation of NADPH oxidase NOX1, and so generating excess ROS. Inhibits stem cell self-renewal, acting via CD47 signaling, probably by regulation of the stem cell transcription factors POU5F1/OCT4, SOX2, MYC/c-Myc and KLF4. Negatively modulates wound healing, acting via CD47. Ligand for receptor CD36. Involved in inducing apoptosis in podocytes in response to elevated free fatty acids, acting via CD36. Plays a role in suppressing angiogenesis, acting, depending on context, via CD36 or CD47. Promotes cellular senescence in a TP53-CDKN1A-RB1 signaling-dependent manner. Ligand for immunoglobulin-like cell surface receptor SIRPA. Involved in ROS signaling in non-phagocytic cells, stimulating NADPH oxidase-derived ROS production, acting via interaction with SIRPA. Plays a role in metabolic dysfunction in diet-induced obesity, perhaps acting by exacerbating adipose inflammatory activity; its effects may be mediated, at least in part, through enhanced adipocyte proliferation. Plays a role in ER stress response, via its interaction with the activating transcription factor 6 alpha (ATF6) which produces adaptive ER stress response factors. May be involved in age-related conditions, including metabolic dysregulation, during normal aging. This is Thrombospondin-1 (Thbs1) from Mus musculus (Mouse).